Consider the following 177-residue polypeptide: Large ribosomal subunit protein uL6 (177 aa).

Belongs to the universal ribosomal protein uL6 family. Part of the 50S ribosomal subunit.

In terms of biological role, this protein binds to the 23S rRNA, and is important in its secondary structure. It is located near the subunit interface in the base of the L7/L12 stalk, and near the tRNA binding site of the peptidyltransferase center. In Cellvibrio japonicus (strain Ueda107) (Pseudomonas fluorescens subsp. cellulosa), this protein is Large ribosomal subunit protein uL6.